Consider the following 243-residue polypeptide: Carboxy-S-adenosyl-L-methionine synthase (243 aa).

Residues Tyr40, 65–67 (GCS), 90–91 (DN), 118–119 (DI), Asn133, and Arg200 each bind S-adenosyl-L-methionine.

The protein belongs to the class I-like SAM-binding methyltransferase superfamily. Cx-SAM synthase family. In terms of assembly, homodimer.

It catalyses the reaction prephenate + S-adenosyl-L-methionine = carboxy-S-adenosyl-L-methionine + 3-phenylpyruvate + H2O. Functionally, catalyzes the conversion of S-adenosyl-L-methionine (SAM) to carboxy-S-adenosyl-L-methionine (Cx-SAM). This chain is Carboxy-S-adenosyl-L-methionine synthase, found in Shewanella woodyi (strain ATCC 51908 / MS32).